A 489-amino-acid chain; its full sequence is Major aspartyl peptidase 1 (489 aa).

Residues 1 to 16 form the signal peptide; that stretch reads MHYLAVALPLLTLALA. In terms of domain architecture, Peptidase A1 spans 101-432; sequence YAGQVSIGTP…RYNPAAIGFA (332 aa). Residue D119 is part of the active site. G121 lines the pepstatin A pocket. A disulfide bond links C132 and C137. Positions 161, 163, and 164 each coordinate pepstatin A. Residue N266 is glycosylated (N-linked (GlcNAc...) asparagine). Y286 lines the pepstatin A pocket. D317 is a catalytic residue. 2 residues coordinate pepstatin A: T320 and T321. An intrachain disulfide couples C357 to C391. A disordered region spans residues 442–466; it reads AGNPSSSTTGGGTSGSNGGGSSSGA. Over residues 450-463 the composition is skewed to gly residues; it reads TGGGTSGSNGGGSS. A propeptide spans 456 to 489 (removed at pH 5.0; by autocatalysis); that stretch reads GSNGGGSSSGAMERKGVQLGWLVGAVAVGVAAMI.

The protein belongs to the peptidase A1 family. Monomer. Post-translationally, activated by the autocatalytic cleavage of the propeptide. Cleaved at the end of the propeptide promiscuously from residue 76 to residue 79. C-terminal cleavage by autocatalysis at Gly-456 at the pH optimum indicating a possible regulatory or other function of this propeptide.

The protein localises to the secreted. With respect to regulation, activated by low pH. Inhibited by pepstatin A with an IC(50) of 1.4 nM. Inhibited by acetyl pepstatin. Inhibited by HIV antiretroviral therapy protease inhibitors including amprenavir and ritonavir. Inhibited by HIV-1 protease inhibitor brecanavir with an approximate IC(50) of 352 nM. Inhibited by HIV-1 protease inhibitors CGP53437 and GS-8374. From the tested peptidomimetic inhibitor molecules, macrocycles containing P2-P3' tethered side chains, statines in P1 and an alpha amino acid in P2' are the best. From the linear peptidomimetic inhibitors, the ones with a phenylstatine or hydroxyethylamine scissile bond isoster are better than compounds with a reduced bond or a homo-amide. Overall, inhibitors with a phenylalanine side chain, either unsubstituted or with a small substituent, is preferred in P1 while a bulkier P1 side chain leads to lower inhibition. Possesses prevalent extracellular endopeptidase activity at low pH condition. Required for high-density growth in acidic environments. Broad substrate specificity with preference cleavage of the peptide substrate between hydrophobic amino acids. Cleaves substrate at P1-P1' between Phe-Leu. Positively charged amino acids are preferred at P2. Prefers hydrophobic amino acids at the P3 and P4 positions. Cleaves substrate also at P1'-P2' between Leu-Val to some degree. Required for virulence in mouse inhalation model of infection. The chain is Major aspartyl peptidase 1 from Cryptococcus neoformans var. grubii serotype A (strain H99 / ATCC 208821 / CBS 10515 / FGSC 9487) (Filobasidiella neoformans var. grubii).